Here is a 299-residue protein sequence, read N- to C-terminus: Spermatocyte protein spe-11 (299 aa).

Residues 1-38 (MSDEEIDISTALNNKTTPKKKSLKRNSNSQEGYESPEE) form a disordered region.

In terms of tissue distribution, expressed in mature sperm.

The protein localises to the cytoplasm. It localises to the perinuclear region. Paternally sperm-supplied factor required for embryogenesis. Plays a role in preventing polyspermy possibly by promoting the formation of a continuous and cohesive eggshell chitin layer. The chain is Spermatocyte protein spe-11 (spe-11) from Caenorhabditis elegans.